The sequence spans 359 residues: Cytoplasmic tRNA 2-thiolation protein 2 (359 aa).

It belongs to the CTU2/NCS2 family.

It localises to the cytoplasm. Its pathway is tRNA modification; 5-methoxycarbonylmethyl-2-thiouridine-tRNA biosynthesis. Plays a central role in 2-thiolation of mcm(5)S(2)U at tRNA wobble positions of tRNA(Lys), tRNA(Glu) and tRNA(Gln). May act by forming a heterodimer with NCS6 that ligates sulfur from thiocarboxylated URM1 onto the uridine of tRNAs at wobble position. Prior mcm(5) tRNA modification by the elongator complex is required for 2-thiolation. May also be involved in protein urmylation. The chain is Cytoplasmic tRNA 2-thiolation protein 2 from Ajellomyces capsulatus (strain NAm1 / WU24) (Darling's disease fungus).